A 525-amino-acid chain; its full sequence is Light-independent protochlorophyllide reductase subunit B (525 aa).

Position 36 (Asp36) interacts with [4Fe-4S] cluster. Residue Asp292 is the Proton donor of the active site. 428–429 serves as a coordination point for substrate; it reads GL. Residues 447–470 form a disordered region; it reads PSASSENGSAPLSAGTATPAAAPE. The segment covering 460–470 has biased composition (low complexity); that stretch reads AGTATPAAAPE.

This sequence belongs to the ChlB/BchB/BchZ family. In terms of assembly, protochlorophyllide reductase is composed of three subunits; BchL, BchN and BchB. Forms a heterotetramer of two BchB and two BchN subunits. [4Fe-4S] cluster is required as a cofactor.

The catalysed reaction is chlorophyllide a + oxidized 2[4Fe-4S]-[ferredoxin] + 2 ADP + 2 phosphate = protochlorophyllide a + reduced 2[4Fe-4S]-[ferredoxin] + 2 ATP + 2 H2O. It functions in the pathway porphyrin-containing compound metabolism; bacteriochlorophyll biosynthesis (light-independent). Component of the dark-operative protochlorophyllide reductase (DPOR) that uses Mg-ATP and reduced ferredoxin to reduce ring D of protochlorophyllide (Pchlide) to form chlorophyllide a (Chlide). This reaction is light-independent. The NB-protein (BchN-BchB) is the catalytic component of the complex. The sequence is that of Light-independent protochlorophyllide reductase subunit B from Chlorobium luteolum (strain DSM 273 / BCRC 81028 / 2530) (Pelodictyon luteolum).